Here is a 346-residue protein sequence, read N- to C-terminus: Tyrosine--tRNA ligase (346 aa).

A 'HIGH' region motif is present at residues 47–56 (PSGRIHIAQA). A 'KMSKS' region motif is present at residues 230–234 (KMSKS). Lys233 provides a ligand contact to ATP.

It belongs to the class-I aminoacyl-tRNA synthetase family. As to quaternary structure, homodimer.

It carries out the reaction tRNA(Tyr) + L-tyrosine + ATP = L-tyrosyl-tRNA(Tyr) + AMP + diphosphate + H(+). In terms of biological role, catalyzes the attachment of tyrosine to tRNA(Tyr) in a two-step reaction: tyrosine is first activated by ATP to form Tyr-AMP and then transferred to the acceptor end of tRNA(Tyr). This is Tyrosine--tRNA ligase (YARS) from Acanthamoeba polyphaga (Amoeba).